Here is a 372-residue protein sequence, read N- to C-terminus: Chemerin-like receptor 1 (372 aa).

Over 1–39 (MEYEGYNDSSIYGEEYSDGSDYIVDLEEAGPLEAKVAEV) the chain is Extracellular. The N-linked (GlcNAc...) asparagine glycan is linked to asparagine 7. A helical transmembrane segment spans residues 40 to 62 (FLVVIYSLVCFLGILGNGLVIVI). Residues 63 to 73 (ATFKMKKTVNT) lie on the Cytoplasmic side of the membrane. A helical membrane pass occupies residues 74 to 95 (VWFVNLAVADFLFNIFLPIHIT). Residues 96–112 (YAAMDYHWVFGKAMCKI) are Extracellular-facing. A disulfide bond links cysteine 110 and cysteine 188. The chain crosses the membrane as a helical span at residues 113–133 (SSFLLSHNMYTSVFLLTVISF). The Cytoplasmic portion of the chain corresponds to 134-152 (DRCISVLLPVWSQNHRSVR). The helical transmembrane segment at 153-174 (LAYMTCVVVWVLAFFLSSPSLV) threads the bilayer. Topologically, residues 175–223 (FRDTVSTSHGKITCFNNFSLAAPEPFSHSTHPRTDPVGYSRHVAVTVTR) are extracellular. N-linked (GlcNAc...) asparagine glycosylation is present at asparagine 191. A helical membrane pass occupies residues 224–244 (FLCGFLIPVFIITACYLTIVF). Residues 245–260 (KLQRNRLAKTKKPFKI) are Cytoplasmic-facing. The chain crosses the membrane as a helical span at residues 261-281 (IITIIITFFLCWCPYHTLYLL). Residues 282–299 (ELHHTAVPASVFSLGLPL) are Extracellular-facing. The chain crosses the membrane as a helical span at residues 300-319 (ATAVAIANSCMNPILYVFMG). Residues 320 to 372 (HDFKKFKVALFSRLVNALSEDTGPSSYPSHRSFTKMSSLIEKASVNEKETSTL) are Cytoplasmic-facing. A Phosphoserine modification is found at serine 338. The residue at position 341 (threonine 341) is a Phosphothreonine. Serine 348, serine 351, and serine 357 each carry phosphoserine. The residue at position 371 (threonine 371) is a Phosphothreonine.

This sequence belongs to the chemokine-like receptor (CMKLR) family. As to expression, high expression in heart and lung, low in small intestines, colon, kidney, liver, uterus and brain.

It is found in the cell membrane. Its function is as follows. Receptor for the chemoattractant adipokine chemerin/RARRES2 and for the omega-3 fatty acid derived molecule resolvin E1. Interaction with RARRES2 initiates activation of G proteins G(i)/G(o) and beta-arrestin pathways inducing cellular responses via second messenger pathways such as intracellular calcium mobilization, phosphorylation of MAP kinases MAPK1/MAPK3 (ERK1/2), TYRO3, MAPK14/P38MAPK and PI3K leading to multifunctional effects, like, reduction of immune responses, enhancing of adipogenesis and angionesis. Resolvin E1 down-regulates cytokine production in macrophages by reducing the activation of MAPK1/3 (ERK1/2) and NF-kappa-B. Positively regulates adipogenesis and adipocyte metabolism. In Rattus norvegicus (Rat), this protein is Chemerin-like receptor 1 (Cmklr1).